The following is a 400-amino-acid chain: NADH-ubiquinone oxidoreductase 49 kDa subunit (400 aa).

It belongs to the complex I 49 kDa subunit family.

Its subcellular location is the mitochondrion. It catalyses the reaction a ubiquinone + NADH + 5 H(+)(in) = a ubiquinol + NAD(+) + 4 H(+)(out). Core subunit of the mitochondrial membrane respiratory chain NADH dehydrogenase (Complex I) that is believed to belong to the minimal assembly required for catalysis. Complex I functions in the transfer of electrons from NADH to the respiratory chain. The immediate electron acceptor for the enzyme is believed to be ubiquinone. Component of the iron-sulfur (IP) fragment of the enzyme. Component of the iron-sulfur (IP) fragment of the enzyme. This is NADH-ubiquinone oxidoreductase 49 kDa subunit (NAD7) from Paramecium tetraurelia.